The sequence spans 926 residues: Protein transport protein SEC24-2 (926 aa).

Residues 1-54 form a disordered region; it reads MSHHKKRVYPQAQAQYGQSATPLQQPAQLVPPQDPAAAGMSYAQMGMPPQGAAA. The segment covering 20–54 has biased composition (low complexity); it reads ATPLQQPAQLVPPQDPAAAGMSYAQMGMPPQGAAA. Zn(2+)-binding residues include C231, C234, C253, and C256. Positions 231-256 are zinc finger-like; that stretch reads CRRCRSYMNPFITFIEQGRRWRCNFC.

Belongs to the SEC23/SEC24 family. SEC24 subfamily. In terms of assembly, the COPII coat is composed of at least 5 proteins: the SEC23/24 complex, the SEC13/31 complex, and the protein SAR1. Golgi apparatus membrane; Peripheral membrane protein; Cytoplasmic side.

It localises to the cytoplasm. The protein resides in the cytoplasmic vesicle. The protein localises to the COPII-coated vesicle membrane. Its subcellular location is the endoplasmic reticulum membrane. It is found in the golgi apparatus membrane. Its function is as follows. Component of the coat protein complex II (COPII) which promotes the formation of transport vesicles from the endoplasmic reticulum (ER). The coat has two main functions, the physical deformation of the endoplasmic reticulum membrane into vesicles and the selection of cargo molecules. The protein is Protein transport protein SEC24-2 (SEC242) of Saccharomyces uvarum (strain ATCC 76518 / CBS 7001 / CLIB 283 / NBRC 10550 / MCYC 623 / NCYC 2669 / NRRL Y-11845) (Yeast).